The primary structure comprises 479 residues: Ribosomal RNA small subunit methyltransferase F (479 aa).

S-adenosyl-L-methionine contacts are provided by residues alanine 125–lysine 131, glutamate 149, aspartate 176, and aspartate 194. The active-site Nucleophile is cysteine 247.

This sequence belongs to the class I-like SAM-binding methyltransferase superfamily. RsmB/NOP family.

It localises to the cytoplasm. The enzyme catalyses cytidine(1407) in 16S rRNA + S-adenosyl-L-methionine = 5-methylcytidine(1407) in 16S rRNA + S-adenosyl-L-homocysteine + H(+). In terms of biological role, specifically methylates the cytosine at position 1407 (m5C1407) of 16S rRNA. This is Ribosomal RNA small subunit methyltransferase F from Escherichia coli O7:K1 (strain IAI39 / ExPEC).